A 445-amino-acid polypeptide reads, in one-letter code: Phosphoglucosamine mutase (445 aa).

Serine 102 (phosphoserine intermediate) is an active-site residue. The Mg(2+) site is built by serine 102, aspartate 241, aspartate 243, and aspartate 245. Serine 102 bears the Phosphoserine mark.

The protein belongs to the phosphohexose mutase family. Mg(2+) is required as a cofactor. In terms of processing, activated by phosphorylation.

It carries out the reaction alpha-D-glucosamine 1-phosphate = D-glucosamine 6-phosphate. Its function is as follows. Catalyzes the conversion of glucosamine-6-phosphate to glucosamine-1-phosphate. The polypeptide is Phosphoglucosamine mutase (Shigella dysenteriae serotype 1 (strain Sd197)).